Reading from the N-terminus, the 1906-residue chain is Myosin light chain kinase, smooth muscle (1906 aa).

2 consecutive Ig-like C2-type domains span residues P28–T117 and P156–T244. Disordered stretches follow at residues S127–K157 and E309–S453. Positions E309–K321 are enriched in basic and acidic residues. Polar residues-rich tracts occupy residues L345–L354 and P384–P402. Basic and acidic residues predominate over residues R403–P424. 4 Ig-like C2-type domains span residues P429–T517, P521–T613, P637–T725, and P735–S830. Residues V660 to E676 form an IIA-1 repeat. The tract at residues V660–P1833 is 4 X repeats, motif IIA. The IIB-1 repeat unit spans residues S693–T708. Residues S693–T1866 are 5 X repeats, motif IIB. The stretch at I758 to E774 is one IIA-2 repeat. One copy of the IIB-2 repeat lies at T791–I807. Disordered stretches follow at residues R831–V881 and P947–F1086. 2 stretches are compositionally biased toward basic and acidic residues: residues E833–G850 and S867–V881. One copy of the III-1 repeat lies at A970 to K987. The segment at A970–Q1226 is 4 X repeats, motif III. Positions T977–P988 are enriched in pro residues. The III-2 repeat unit spans residues A999–N1016. Residues V1039 to H1051 are compositionally biased toward basic and acidic residues. The III-3 repeat unit spans residues I1061–P1078. Ig-like C2-type domains are found at residues P1084 to L1172 and P1225 to T1313. An IIA-3 repeat occupies I1107 to A1123. The IIB-3 repeat unit spans residues S1140–C1156. The interval K1180–I1227 is disordered. One copy of the III-4 repeat lies at V1209–Q1226. One copy of the IIB-4 repeat lies at K1281 to L1297. The tract at residues K1317–K1364 is motif IA. Positions P1321–K1414 constitute a Fibronectin type-III domain. Positions R1385–P1402 are motif IB. The disordered stretch occupies residues K1414 to E1433. Positions Q1415–K1432 are enriched in acidic residues. In terms of domain architecture, Protein kinase spans Y1453–L1708. ATP-binding positions include L1459–V1467 and K1482. D1574 serves as the catalytic Proton acceptor. The interval T1700–G1763 is calmodulin-binding. The calmodulin autoinhibition (AM13) region stretch occupies residues E1716–Y1728. A calmodulin recognition (RS20) region region spans residues A1730 to S1749. The residue at position 1762 (S1762) is a Phosphoserine; by PKG. S1768 carries the post-translational modification Phosphoserine; by MAPK. The region spanning P1794–E1885 is the Ig-like C2-type 9 domain. The stretch at I1817–P1833 is one IIA-4 repeat. An IIB-5 repeat occupies S1851–T1866. The segment at E1885 to E1906 is disordered. Positions G1893–E1906 are enriched in acidic residues.

It belongs to the protein kinase superfamily. CAMK Ser/Thr protein kinase family. In terms of assembly, all isoforms including Telokin bind calmodulin. Requires Mg(2+) as cofactor. Ca(2+) serves as cofactor. The C-terminus is deglutamylated, leading to the formation of Myosin light chain kinase, smooth muscle, deglutamylated form. The C-terminus is variable, with one to five C-terminal glutamyl residues being removed producing five forms differring in their number of C-terminal glutamyl residues. Post-translationally, acetylated. In terms of processing, phosphorylation of telokin by PKG has no significant effect on its myosin binding activity, but promotes translocation to the membrane. In terms of tissue distribution, isoform telokin is expressed in gizzard, heart, lung, intestine, and skeletal muscle although the levels of the expression in the latter were much less than that in the gizzard.

The protein resides in the cytoplasm. Its subcellular location is the cytosol. The protein localises to the membrane. The enzyme catalyses L-seryl-[myosin light chain] + ATP = O-phospho-L-seryl-[myosin light chain] + ADP + H(+). The catalysed reaction is L-threonyl-[myosin light chain] + ATP = O-phospho-L-threonyl-[myosin light chain] + ADP + H(+). Activated by phosphorylation on Tyr-478. Isoforms which lack this tyrosine residue are not regulated in this way. All catalytically active isoforms require binding to calcium and calmodulin for activation. Functionally, phosphorylates a specific serine in the N-terminus of a myosin light chain, which leads to the formation of calmodulin/MLCK signal transduction complexes which allow selective transduction of calcium signals. The sequence is that of Myosin light chain kinase, smooth muscle (Mylk) from Gallus gallus (Chicken).